A 133-amino-acid polypeptide reads, in one-letter code: Gamma-crystallin 1 (133 aa).

In terms of domain architecture, Beta/gamma crystallin 'Greek key' 2 spans tryptophan 1 to proline 41. The connecting peptide stretch occupies residues glutamine 42 to serine 46. 2 consecutive Beta/gamma crystallin 'Greek key' domains span residues phenylalanine 47–glutamate 87 and glycine 88–glutamine 130.

This sequence belongs to the beta/gamma-crystallin family. In terms of assembly, monomer.

Functionally, crystallins are the dominant structural components of the vertebrate eye lens. The polypeptide is Gamma-crystallin 1 (Rana temporaria (European common frog)).